The primary structure comprises 430 residues: Ribosomal protein uS12 methylthiotransferase RimO (430 aa).

The 118-residue stretch at 2–119 folds into the MTTase N-terminal domain; that stretch reads ISVYSISLGC…WPAMLAHALK (118 aa). [4Fe-4S] cluster contacts are provided by Cys11, Cys46, Cys81, Cys145, Cys149, and Cys152. A Radical SAM core domain is found at 131-361; the sequence is STGPSYAWLK…MEVQAEISEE (231 aa). Residues 364–430 enclose the TRAM domain; the sequence is AVHEGTRQQV…TRTYDLVALV (67 aa).

It belongs to the methylthiotransferase family. RimO subfamily. [4Fe-4S] cluster is required as a cofactor.

Its subcellular location is the cytoplasm. It carries out the reaction L-aspartate(89)-[ribosomal protein uS12]-hydrogen + (sulfur carrier)-SH + AH2 + 2 S-adenosyl-L-methionine = 3-methylsulfanyl-L-aspartate(89)-[ribosomal protein uS12]-hydrogen + (sulfur carrier)-H + 5'-deoxyadenosine + L-methionine + A + S-adenosyl-L-homocysteine + 2 H(+). Catalyzes the methylthiolation of an aspartic acid residue of ribosomal protein uS12. This chain is Ribosomal protein uS12 methylthiotransferase RimO, found in Nitratidesulfovibrio vulgaris (strain DP4) (Desulfovibrio vulgaris).